The primary structure comprises 687 residues: Polyphosphate kinase (687 aa).

N45 serves as a coordination point for ATP. 2 residues coordinate Mg(2+): R375 and R405. Catalysis depends on H435, which acts as the Phosphohistidine intermediate. The ATP site is built by Y472, R568, and H596.

This sequence belongs to the polyphosphate kinase 1 (PPK1) family. The cofactor is Mg(2+). Post-translationally, an intermediate of this reaction is the autophosphorylated ppk in which a phosphate is covalently linked to a histidine residue through a N-P bond.

The enzyme catalyses [phosphate](n) + ATP = [phosphate](n+1) + ADP. In terms of biological role, catalyzes the reversible transfer of the terminal phosphate of ATP to form a long-chain polyphosphate (polyP). The protein is Polyphosphate kinase of Burkholderia cenocepacia (strain HI2424).